Reading from the N-terminus, the 960-residue chain is FYVE, RhoGEF and PH domain-containing protein 1 (960 aa).

Disordered stretches follow at residues 1–210 and 226–355; these read MHGH…SSAA and ASDR…REIP. Position 48 is a phosphoserine (Ser48). The span at 125–135 shows a compositional bias: basic and acidic residues; it reads PHPEGPQRLRS. 3 stretches are compositionally biased toward pro residues: residues 137–149, 156–165, and 173–190; these read PGPP…PRPS, GPKPQVPPKP, and VLPP…PLPA. Residues 171–187 carry the SH3-binding motif; sequence PRVLPPPEPIPPPPSRP. At Ser205 the chain carries Phosphoserine. Residues 231-251 show a composition bias toward pro residues; it reads APGPCPVPPEPAMLPQPPPQP. The segment covering 273 to 284 has biased composition (basic and acidic residues); sequence RDGEKVPNRDSG. A compositionally biased stretch (low complexity) spans 285–294; the sequence is IDSISSPSNS. Positions 335-350 are enriched in acidic residues; sequence VDSDLEEEEEEEEEEK. The DH domain maps to 372 to 560; it reads KVFHIANELL…ATAAEHSNAA (189 aa). The PH 1 domain occupies 589–688; it reads ELIKEGHILK…WVQAINSTLL (100 aa). The tract at residues 701–725 is disordered; it reads NSTNRDDEDTPPNSPNVDLGKRAPT. Position 710 is a phosphothreonine (Thr710). Position 714 is a phosphoserine (Ser714). The FYVE-type zinc-finger motif lies at 729–789; the sequence is EKEVTMCMRC…VCTDCYVALH (61 aa). The Zn(2+) site is built by Cys735, Cys738, Cys752, Cys755, Cys760, Cys763, Cys781, and Cys784. The 101-residue stretch at 820–920 folds into the PH 2 domain; that stretch reads NSVICSFLHY…WMAVLGRAGR (101 aa). The disordered stretch occupies residues 922–960; sequence DTFCPGPTLSEDKEMEETPVAASGATAEPPEASQTRDKT.

Interacts with DBNL/ABP1 and CTTN. Binds CDC42. May interact with CCPG1.

It is found in the cytoplasm. It localises to the cell projection. The protein localises to the lamellipodium. Its subcellular location is the ruffle. The protein resides in the cytoskeleton. In terms of biological role, activates CDC42, a member of the Ras-like family of Rho- and Rac proteins, by exchanging bound GDP for free GTP. Plays a role in regulating the actin cytoskeleton and cell shape. The chain is FYVE, RhoGEF and PH domain-containing protein 1 (Fgd1) from Mus musculus (Mouse).